Here is a 380-residue protein sequence, read N- to C-terminus: Cytochrome b (380 aa).

4 consecutive transmembrane segments (helical) span residues 33–53 (FGSL…FLAM), 77–98 (WFIR…YLHI), 113–133 (WTIG…GYVL), and 178–198 (FFTF…VHLL). Residues H83 and H97 each coordinate heme b. Heme b is bound by residues H182 and H196. Position 201 (H201) interacts with a ubiquinone. 4 helical membrane passes run 226-246 (YKDL…ALFS), 288-308 (LGGV…PILH), 320-340 (LTQT…WIGG), and 347-367 (FVII…VLAP).

This sequence belongs to the cytochrome b family. The cytochrome bc1 complex contains 3 respiratory subunits (MT-CYB, CYC1 and UQCRFS1), 2 core proteins (UQCRC1 and UQCRC2) and probably 6 low-molecular weight proteins. Requires heme b as cofactor.

It localises to the mitochondrion inner membrane. Its function is as follows. Component of the ubiquinol-cytochrome c reductase complex (complex III or cytochrome b-c1 complex) that is part of the mitochondrial respiratory chain. The b-c1 complex mediates electron transfer from ubiquinol to cytochrome c. Contributes to the generation of a proton gradient across the mitochondrial membrane that is then used for ATP synthesis. The sequence is that of Cytochrome b (mt-cyb) from Lampris guttatus (Opah).